Reading from the N-terminus, the 397-residue chain is Intermediate capsid protein VP6 (397 aa).

The interaction with the inner capsid protein VP2 stretch occupies residues 62-73; that stretch reads DFGLLGTTLLNL. His-153 contacts Zn(2+). Ca(2+) contacts are provided by Asn-266 and Asp-286.

This sequence belongs to the rotavirus VP6 family. In terms of assembly, homotrimer. Interacts with the inner capsid protein VP2. Interacts with the outer capsid glycoprotein VP7. Interacts with the outer capsid protein VP5*. In terms of processing, the N-terminus is blocked. Post-translationally, sumoylated with SUMO1 and SUMO2. Sumoylation of viral proteins seems to have a positive role on viral replication.

Its subcellular location is the virion. Its function is as follows. Intermediate capsid protein that self assembles to form an icosahedral capsid with a T=13 symmetry, which consists of 230 trimers of VP6, with channels at each of its five-fold vertices. This capsid constitutes the middle concentric layer of the viral mature particle. The innermost VP2 capsid and the intermediate VP6 capsid remain intact following cell entry to protect the dsRNA from degradation and to prevent unfavorable antiviral responses in the host cell during all the replication cycle of the virus. Nascent transcripts are transcribed within the structural confines of this double-layered particle (DLP) and are extruded through the channels at the five-fold axes. VP6 is required for the transcription activity of the DLP. This Rotavirus A (strain RVA/Cow/France/RF/1975/G6P6[1]) (RV-A) protein is Intermediate capsid protein VP6.